The primary structure comprises 305 residues: Superkiller complex protein 8 (305 aa).

M1 carries the post-translational modification N-acetylmethionine. N-acetylthreonine; in WD repeat-containing protein 61, N-terminally processed is present on T2. WD repeat units lie at residues 14 to 57 (AHDD…LELQ), 62 to 101 (GHQLGVVSVDISHTLPIAASSSLDAHIRLWDLENGKQMKS), 104 to 143 (AGPVDAWTLAFSPDSQYLATGTHMGKVNIFGVESGKKEYS), 146 to 187 (TRGK…HTLE), 188 to 227 (GHAMPIRSLTFSPDSQLLVTASDDGYIKIYDVQHANLAGT), 230 to 269 (GHASWVLNVAFCPDDTHFVSSSSDKSVKVWDVGTRTCIHT), and 272 to 305 (DHQDQVWGVKYNGNGSKIVSVGDDQEIHVYDCPI).

The protein belongs to the SKI8 family. In terms of assembly, component of the PAF1 complex, which consists of CDC73, PAF1, LEO1, CTR9, RTF1 and SKIC8. The PAF1 complex interacts with PHF5A. Within the PAF1 complex interacts directly with PHF5A. Component of the SKI complex which consists of SKIC2, SKIC3 and SKIC8.

The protein localises to the nucleus. Its subcellular location is the cytoplasm. Its function is as follows. Component of the PAF1 complex (PAF1C) which has multiple functions during transcription by RNA polymerase II and is implicated in regulation of development and maintenance of embryonic stem cell pluripotency. PAF1C associates with RNA polymerase II through interaction with POLR2A CTD non-phosphorylated and 'Ser-2'- and 'Ser-5'-phosphorylated forms and is involved in transcriptional elongation, acting both independently and synergistically with TCEA1 and in cooperation with the DSIF complex and HTATSF1. PAF1C is required for transcription of Hox and Wnt target genes. PAF1C is involved in hematopoiesis and stimulates transcriptional activity of KMT2A/MLL1; it promotes leukemogenesis through association with KMT2A/MLL1-rearranged oncoproteins, such as KMT2A/MLL1-MLLT3/AF9 and KMT2A/MLL1-MLLT1/ENL. PAF1C is involved in histone modifications such as ubiquitination of histone H2B and methylation on histone H3 'Lys-4' (H3K4me3). PAF1C recruits the RNF20/40 E3 ubiquitin-protein ligase complex and the E2 enzyme UBE2A or UBE2B to chromatin which mediate monoubiquitination of 'Lys-120' of histone H2B (H2BK120ub1); UB2A/B-mediated H2B ubiquitination is proposed to be coupled to transcription. PAF1C is involved in mRNA 3' end formation probably through association with cleavage and poly(A) factors. In case of infection by influenza A strain H3N2, PAF1C associates with viral NS1 protein, thereby regulating gene transcription. Required for mono- and trimethylation on histone H3 'Lys-4' (H3K4me3), dimethylation on histone H3 'Lys-79' (H3K4me3). Required for Hox gene transcription. Also acts as a component of the SKI complex, a multiprotein complex that assists the RNA-degrading exosome during the mRNA decay and quality-control pathways. The SKI complex catalyzes mRNA extraction from 80S ribosomal complexes in the 3'-5' direction and channels mRNA to the cytosolic exosome for degradation. SKI-mediated extraction of mRNA from stalled ribosomes allow binding of the Pelota-HBS1L complex and subsequent ribosome disassembly by ABCE1 for ribosome recycling. This is Superkiller complex protein 8 (Skic8) from Mus musculus (Mouse).